The chain runs to 275 residues: MNIQFSKMHGLGNDFMVIDNVTQNVFLSKDTISRLADRNFGIGFDQLLMIEPPYDPELDFHYRIFNADGSEVEQCGNGARCFARFVKMKGLTQKRIINVSTAKGKIQLKIEHDGNITVDMGKPILEPAKVPFEAQKEEKTYILRVEDHTVLCGVVSIGNPHCVVLVDDIDNAPVETLGPLLENHERFPNKVNVGFLEIKSRDHARLRVWERGVGETLACGTGACAAAVVGQLQDKLNPHCTIELPGGELRLFWQPGQSVKMTGTADFVFDGQIQI.

Positions 13, 46, and 66 each coordinate substrate. Cysteine 75 (proton donor) is an active-site residue. Substrate-binding positions include 76-77, asparagine 159, asparagine 192, and 210-211; these read GN and ER. The active-site Proton acceptor is cysteine 219. Substrate is bound at residue 220-221; sequence GT.

This sequence belongs to the diaminopimelate epimerase family. In terms of assembly, homodimer.

It is found in the cytoplasm. The catalysed reaction is (2S,6S)-2,6-diaminopimelate = meso-2,6-diaminopimelate. Its pathway is amino-acid biosynthesis; L-lysine biosynthesis via DAP pathway; DL-2,6-diaminopimelate from LL-2,6-diaminopimelate: step 1/1. Functionally, catalyzes the stereoinversion of LL-2,6-diaminopimelate (L,L-DAP) to meso-diaminopimelate (meso-DAP), a precursor of L-lysine and an essential component of the bacterial peptidoglycan. This Psychromonas ingrahamii (strain DSM 17664 / CCUG 51855 / 37) protein is Diaminopimelate epimerase.